The chain runs to 990 residues: Bifunctional glutamine synthetase adenylyltransferase/adenylyl-removing enzyme (990 aa).

The segment at 1 to 474 (MIFSAITADL…HYAKLFEGDP (474 aa)) is adenylyl removase. Residues 478 to 990 (AKLPPVDYGA…FNRLIGGEDA (513 aa)) are adenylyl transferase.

This sequence belongs to the GlnE family. The cofactor is Mg(2+).

It carries out the reaction [glutamine synthetase]-O(4)-(5'-adenylyl)-L-tyrosine + phosphate = [glutamine synthetase]-L-tyrosine + ADP. The enzyme catalyses [glutamine synthetase]-L-tyrosine + ATP = [glutamine synthetase]-O(4)-(5'-adenylyl)-L-tyrosine + diphosphate. In terms of biological role, involved in the regulation of glutamine synthetase GlnA, a key enzyme in the process to assimilate ammonia. When cellular nitrogen levels are high, the C-terminal adenylyl transferase (AT) inactivates GlnA by covalent transfer of an adenylyl group from ATP to specific tyrosine residue of GlnA, thus reducing its activity. Conversely, when nitrogen levels are low, the N-terminal adenylyl removase (AR) activates GlnA by removing the adenylyl group by phosphorolysis, increasing its activity. The regulatory region of GlnE binds the signal transduction protein PII (GlnB) which indicates the nitrogen status of the cell. This chain is Bifunctional glutamine synthetase adenylyltransferase/adenylyl-removing enzyme, found in Rhodopseudomonas palustris (strain TIE-1).